We begin with the raw amino-acid sequence, 771 residues long: Hyperosmolality-gated Ca2+ permeable channel 1.2 (771 aa).

Over 1-4 (MATL) the chain is Extracellular. The helical transmembrane segment at 5–27 (QDIGVSAGINILSAFVFFIIFAV) threads the bilayer. The Cytoplasmic portion of the chain corresponds to 28 to 100 (LRLQPFNDRV…AGLDSVVYLR (73 aa)). Residues 101-125 (IYWLGLKIFTPIAVLAWAVLVPVNW) form a helical membrane-spanning segment. The Extracellular segment spans residues 126-156 (TNNTLEMAKQLRNVTSSDIDKLSVSNIPEYS). The chain crosses the membrane as a helical span at residues 157-178 (MRFWTHIVMAYAFTIWTCYVLM). Residues 179–374 (KEYETIANMR…AIPYVSLTVR (196 aa)) lie on the Cytoplasmic side of the membrane. A helical transmembrane segment spans residues 375-401 (RLIMHVAFFFLTFFFIVPIAFVQSLAT). Residues 402 to 419 (IEGIVKAAPFLKFIVDDK) are Extracellular-facing. The chain crosses the membrane as a helical span at residues 420 to 445 (FMKSVIQGFLPGIALKLFLAFLPSIL). At 446–462 (MIMSKFEGFTSISSLER) the chain is on the cytoplasmic side. A helical transmembrane segment spans residues 463 to 485 (RAAFRYYIFNLVNVFLASVIAGA). Residues 486–504 (AFEQLNSFLNQSANQIPKT) are Extracellular-facing. Residues 505 to 533 (IGVAIPMKATFFITYIMVDGWAGVAGEIL) form a helical membrane-spanning segment. Topologically, residues 534-566 (MLKPLIMFHLKNAFLVKTDKDREEAMDPGSIGF) are cytoplasmic. The chain crosses the membrane as a helical span at residues 567-588 (NTGEPRIQLYFLLGLVYAPVTP). Met589 is a topological domain (extracellular). A helical transmembrane segment spans residues 590 to 605 (LLPFILVFFALAYIVY). Residues 606-625 (RHQIINVYNQEYESAAAFWP) lie on the Cytoplasmic side of the membrane. Residues 626-648 (DVHGRVIAALVISQLLLMGLLGT) traverse the membrane as a helical segment. The Extracellular portion of the chain corresponds to 649–651 (KHA). A helical transmembrane segment spans residues 652 to 670 (ALAAPFLIALPVLTIGFHH). At 671 to 771 (FCKGRYEPAF…PSLPFSGKLV (101 aa)) the chain is on the cytoplasmic side. Positions 741-771 (PTKRQSRRNTPAPSIISGDDSPSLPFSGKLV) are disordered.

Belongs to the CSC1 (TC 1.A.17) family. Homodimer.

The protein resides in the membrane. With respect to regulation, activated by hyperosmotic shock after mannitol or NaCl treatment. Activated by mechanical pressure: activated in response to membrane stretch and poke. Membrane lipids play a key role in mechanosensation by acting as a wall mainly formed by lipid head groups. In terms of biological role, acts as an osmosensitive calcium-permeable cation channel. Specifically conducts cations including Ca(2+), K(+) and Na(+) in vitro. Inactivation or closure of the channel is calcium-dependent. Mechanosensitive ion channel that converts mechanical stimuli into a flow of ions: activated in response to membrane stretch and poke. The chain is Hyperosmolality-gated Ca2+ permeable channel 1.2 from Arabidopsis thaliana (Mouse-ear cress).